The primary structure comprises 125 residues: Large ribosomal subunit protein bL12 (125 aa).

The protein belongs to the bacterial ribosomal protein bL12 family. In terms of assembly, homodimer. Part of the ribosomal stalk of the 50S ribosomal subunit. Forms a multimeric L10(L12)X complex, where L10 forms an elongated spine to which 2 to 4 L12 dimers bind in a sequential fashion. Binds GTP-bound translation factors.

Its function is as follows. Forms part of the ribosomal stalk which helps the ribosome interact with GTP-bound translation factors. Is thus essential for accurate translation. In Campylobacter jejuni (strain RM1221), this protein is Large ribosomal subunit protein bL12.